A 300-amino-acid chain; its full sequence is MRYREIILSIPKEIAENFTSFLDEVGVVGYYEILFDREVPRAPDEEIISDDTKFRVYLAEEDKENETKILIFLKATAGESFFLESRWIETKEYEEAYKEFYKPFIIGSYRVIPTWEKDTALGTTPEGIFPLLVNPGLAFGTGHHETTRLVLGRMGDLNLSAKRIADVGTGSGILSLAAAKSGASLILAIDVDPNSVRSASFNRDENEISSEVLVVEEGGFDHKKIQEQTWDLLIANITFAVLKANIQKIASIKTDHFLFSGVITERKEEFLELLKNTVGGEGVFFREDTGWELIEWKRKG.

4 residues coordinate S-adenosyl-L-methionine: threonine 147, glycine 168, aspartate 190, and asparagine 236.

The protein belongs to the methyltransferase superfamily. PrmA family.

It localises to the cytoplasm. The enzyme catalyses L-lysyl-[protein] + 3 S-adenosyl-L-methionine = N(6),N(6),N(6)-trimethyl-L-lysyl-[protein] + 3 S-adenosyl-L-homocysteine + 3 H(+). Its function is as follows. Methylates ribosomal protein L11. This Leptospira interrogans serogroup Icterohaemorrhagiae serovar Lai (strain 56601) protein is Ribosomal protein L11 methyltransferase.